Here is a 20-residue protein sequence, read N- to C-terminus: Cruzioseptin-15 (20 aa).

Expressed by the skin glands.

It is found in the secreted. Functionally, has antimicrobial activity. This chain is Cruzioseptin-15, found in Cruziohyla calcarifer (Splendid leaf frog).